The primary structure comprises 174 residues: UPF0340 protein SE_1711 (174 aa).

It belongs to the UPF0340 family.

The chain is UPF0340 protein SE_1711 from Staphylococcus epidermidis (strain ATCC 12228 / FDA PCI 1200).